Reading from the N-terminus, the 923-residue chain is Carnitine O-acetyltransferase YAT2 (923 aa).

Polar residues predominate over residues 1–11 (MSSGSTIVSSD). 2 disordered regions span residues 1–21 (MSSG…KHEE) and 197–232 (NKPY…KRKH). N-acetylserine is present on serine 2. Positions 12–21 (KSGRTFKHEE) are enriched in basic and acidic residues. Positions 204-219 (DLEDPDYSSDEDDNDE) are enriched in acidic residues. Positions 220-232 (PTQKDFDDRKRKH) are enriched in basic and acidic residues. CoA is bound by residues 529-541 (GRRS…VKPD) and serine 567. Serine 576 is a binding site for (R)-carnitine. The interval 763–787 (NAVNNPPKRNGHTVNGSRKTSSSSQ) is disordered. A compositionally biased stretch (polar residues) spans 774–787 (HTVNGSRKTSSSSQ). Residue serine 783 is modified to Phosphoserine.

The protein belongs to the carnitine/choline acetyltransferase family.

The protein resides in the cytoplasm. The catalysed reaction is (R)-carnitine + acetyl-CoA = O-acetyl-(R)-carnitine + CoA. In terms of biological role, carnitine O-acetyltransferase involved in the shutteling of acetyl-CoA in the cell. The chain is Carnitine O-acetyltransferase YAT2 from Saccharomyces cerevisiae (strain ATCC 204508 / S288c) (Baker's yeast).